Reading from the N-terminus, the 723-residue chain is Methionine--tRNA ligase (723 aa).

The 'HIGH' region motif lies at 11 to 21 (PYANGPIHAGH). 4 residues coordinate Zn(2+): C143, C146, C156, and C159. Residues 344 to 348 (KFSTS) carry the 'KMSKS' region motif. T347 provides a ligand contact to ATP. Residues 623–723 (DFAKLDLRVG…KEVKLGAKVR (101 aa)) form the tRNA-binding domain.

It belongs to the class-I aminoacyl-tRNA synthetase family. MetG type 1 subfamily. In terms of assembly, homodimer. Zn(2+) is required as a cofactor.

Its subcellular location is the cytoplasm. The catalysed reaction is tRNA(Met) + L-methionine + ATP = L-methionyl-tRNA(Met) + AMP + diphosphate. Its function is as follows. Is required not only for elongation of protein synthesis but also for the initiation of all mRNA translation through initiator tRNA(fMet) aminoacylation. This is Methionine--tRNA ligase from Pyrococcus horikoshii (strain ATCC 700860 / DSM 12428 / JCM 9974 / NBRC 100139 / OT-3).